Reading from the N-terminus, the 262-residue chain is MRRTLYRLMIELTNGRFTSYILRKFAQSRLSSIIIPSYVKVFQINQDEMEKGLKEYGTLHDLFTRRLKEGKRSIDTDASSIVSPVDGVFADQGPIEDTKTFDIKGKRYSIVDMLGNEERAKRYAGGTYMVIYLSPSHYHRIHSPLSGSVTERFVLGRKSYPVNAAGMEYGKEPLSKNYRSVTEVNSDGEHMALVKVGAMFINSIELLHERSTVQKGEEMAYFTFGSTVVLLFEKDMIKAVQELTSGQELRLGEKIATRVSHK.

Catalysis depends on charge relay system; for autoendoproteolytic cleavage activity residues D86, H142, and S226. S226 (schiff-base intermediate with substrate; via pyruvic acid; for decarboxylase activity) is an active-site residue. S226 carries the pyruvic acid (Ser); by autocatalysis modification.

Belongs to the phosphatidylserine decarboxylase family. PSD-B subfamily. Prokaryotic type I sub-subfamily. Heterodimer of a large membrane-associated beta subunit and a small pyruvoyl-containing alpha subunit. It depends on pyruvate as a cofactor. In terms of processing, is synthesized initially as an inactive proenzyme. Formation of the active enzyme involves a self-maturation process in which the active site pyruvoyl group is generated from an internal serine residue via an autocatalytic post-translational modification. Two non-identical subunits are generated from the proenzyme in this reaction, and the pyruvate is formed at the N-terminus of the alpha chain, which is derived from the carboxyl end of the proenzyme. The autoendoproteolytic cleavage occurs by a canonical serine protease mechanism, in which the side chain hydroxyl group of the serine supplies its oxygen atom to form the C-terminus of the beta chain, while the remainder of the serine residue undergoes an oxidative deamination to produce ammonia and the pyruvoyl prosthetic group on the alpha chain. During this reaction, the Ser that is part of the protease active site of the proenzyme becomes the pyruvoyl prosthetic group, which constitutes an essential element of the active site of the mature decarboxylase.

Its subcellular location is the cell membrane. It catalyses the reaction a 1,2-diacyl-sn-glycero-3-phospho-L-serine + H(+) = a 1,2-diacyl-sn-glycero-3-phosphoethanolamine + CO2. It functions in the pathway phospholipid metabolism; phosphatidylethanolamine biosynthesis; phosphatidylethanolamine from CDP-diacylglycerol: step 2/2. Functionally, catalyzes the formation of phosphatidylethanolamine (PtdEtn) from phosphatidylserine (PtdSer). This Bacillus mycoides (strain KBAB4) (Bacillus weihenstephanensis) protein is Phosphatidylserine decarboxylase proenzyme.